The sequence spans 299 residues: Probable alpha-L-glutamate ligase (299 aa).

The ATP-grasp domain maps to 112 to 294 (LQLLTEQGIA…IALQMIVHIE (183 aa)). ATP contacts are provided by residues lysine 148, 185–186 (DF), aspartate 194, and 218–220 (RAN). Residues aspartate 255, glutamate 267, and asparagine 269 each contribute to the Mg(2+) site. Mn(2+)-binding residues include aspartate 255, glutamate 267, and asparagine 269.

This sequence belongs to the RimK family. Requires Mg(2+) as cofactor. It depends on Mn(2+) as a cofactor.

The polypeptide is Probable alpha-L-glutamate ligase (Histophilus somni (strain 2336) (Haemophilus somnus)).